The sequence spans 272 residues: 3-methyl-2-oxobutanoate hydroxymethyltransferase (272 aa).

The Mg(2+) site is built by D43 and D82. 3-methyl-2-oxobutanoate is bound by residues 43-44 (DS), D82, and K112. E114 serves as a coordination point for Mg(2+). The active-site Proton acceptor is the E179.

The protein belongs to the PanB family. In terms of assembly, homodecamer; pentamer of dimers. Mg(2+) serves as cofactor.

Its subcellular location is the cytoplasm. The enzyme catalyses 3-methyl-2-oxobutanoate + (6R)-5,10-methylene-5,6,7,8-tetrahydrofolate + H2O = 2-dehydropantoate + (6S)-5,6,7,8-tetrahydrofolate. It participates in cofactor biosynthesis; (R)-pantothenate biosynthesis; (R)-pantoate from 3-methyl-2-oxobutanoate: step 1/2. In terms of biological role, catalyzes the reversible reaction in which hydroxymethyl group from 5,10-methylenetetrahydrofolate is transferred onto alpha-ketoisovalerate to form ketopantoate. The chain is 3-methyl-2-oxobutanoate hydroxymethyltransferase from Staphylococcus aureus (strain JH1).